We begin with the raw amino-acid sequence, 1727 residues long: Gag-Pol polyprotein (1727 aa).

Glycine 2 is lipidated: N-myristoyl glycine; by host. Residues 109 to 112 (STLL) carry the PTAP/PSAP motif motif. The short motif at 128–132 (VLPDE) is the LYPX(n)L motif element. Disordered regions lie at residues 137 to 221 (LLFQ…PSTW), 302 to 322 (KNVPGPGGLPTQLPNEIDEGF), 443 to 471 (KRETPEEREARLIKEQEEREDRRDRKRDK), and 515 to 547 (DCPKRPRDQKKPAPVLTLGEDSEQGCQGSGAPP). A compositionally biased stretch (pro residues) spans 143-165 (LPHPPHNPLLEPPPYNSPSPPVL). The short motif at 154-157 (PPPY) is the PPXY motif element. The span at 166–187 (SPVSPTTPSAPTPSSLVSSSTP) shows a compositional bias: low complexity. A compositionally biased stretch (pro residues) spans 188 to 204 (PSSPAPPELTPRTPPQT). 2 stretches are compositionally biased toward basic and acidic residues: residues 443-465 (KRETPEEREARLIKEQEEREDRR) and 515-525 (DCPKRPRDQKK). The segment at 501 to 518 (DQCAYCKERGHWIKDCPK) adopts a CCHC-type zinc-finger fold. The Peptidase A2 domain maps to 560–630 (TTFLVDTGAQ…CPYPLLGRDL (71 aa)). The active-site Protease; shared with dimeric partner is the aspartate 565. The region spanning 736–929 (KFLELGVLRP…TKVTYLGYIL (194 aa)) is the Reverse transcriptase domain. Residues aspartate 806, aspartate 880, aspartate 881, aspartate 1181, glutamate 1219, aspartate 1240, and aspartate 1310 each coordinate Mg(2+). Residues 1172–1318 (PDADHTWYTD…ADRVARQAAM (147 aa)) enclose the RNase H type-1 domain. The HHCC-type zinc-finger motif lies at 1383–1421 (HAWTHLGNRKLKLLIEKTDFLIPRASTLIEQVTSACKVC). The region spanning 1438 to 1596 (RGNRPGVYWE…TPYEILYGGP (159 aa)) is the Integrase catalytic domain. Residues aspartate 1449 and aspartate 1508 each contribute to the Mg(2+) site.

The protein belongs to the retroviral Pol polyprotein family. As to quaternary structure, homohexamer; further associates as homomultimer. The virus core is composed of a lattice formed from hexagonal rings, each containing six capsid monomers. Interacts (via PPXY motif) with host NEDD4. Interacts (via PSAP motif) with host TSG101. Interacts (via LYPX(n)L motif) with host PDCD6IP. In terms of assembly, the reverse transcriptase is a monomer (Potential). Interacts (via RNase domains) with host release factor ETF1; this interaction is essential for translational readthrough of amber codon between viral gag and pol genes, as well as for viral replication. As to quaternary structure, homodimer. Requires Mg(2+) as cofactor. Specific enzymatic cleavages by the viral protease yield mature proteins. The protease is released by autocatalytic cleavage. The polyprotein is cleaved during and after budding, this process is termed maturation. In terms of processing, phosphorylated on serine residues.

The protein resides in the virion. The protein localises to the host cell membrane. Its subcellular location is the host late endosome membrane. It localises to the host endosome. It is found in the host multivesicular body. The protein resides in the host cytoplasm. It catalyses the reaction DNA(n) + a 2'-deoxyribonucleoside 5'-triphosphate = DNA(n+1) + diphosphate. The enzyme catalyses Endonucleolytic cleavage to 5'-phosphomonoester.. Its activity is regulated as follows. Most efficiently inhibited by Amprenavir, which is able to block Gag-Pol processing in infected cells. Functionally, plays a role in budding and is processed by the viral protease during virion maturation outside the cell. During budding, it recruits, in a PPXY-dependent or independent manner, Nedd4-like ubiquitin ligases that conjugate ubiquitin molecules to Gag-Pol, or to Gag-Pol binding host factors. Interaction with HECT ubiquitin ligases probably links the viral protein to the host ESCRT pathway and facilitates release. In terms of biological role, targets Gag and gag-pol polyproteins to the plasma membrane via a multipartite membrane binding signal, that includes its myristoylated N-terminus. Also mediates nuclear localization of the pre-integration complex. Its function is as follows. Constituent of the pre-integration complex (PIC) which tethers the latter to mitotic chromosomes. This allows the integration of the viral genome into the host DNA. Forms the spherical core of the virion that encapsulates the genomic RNA-nucleocapsid complex. Functionally, involved in the packaging and encapsidation of two copies of the genome. Binds with high affinity to conserved UCUG elements within the packaging signal, located near the 5'-end of the genome. This binding is dependent on genome dimerization. Acts as a nucleic acid chaperone which is involved in rearrangement of nucleic acid secondary structures during gRNA retrotranscription. In terms of biological role, the aspartyl protease mediates proteolytic cleavages of Gag and Gag-Pol polyproteins during or shortly after the release of the virion from the plasma membrane. Cleavages take place as an ordered, step-wise cascade to yield mature proteins. This process is called maturation. Displays maximal activity during the budding process just prior to particle release from the cell. Its function is as follows. RT is a multifunctional enzyme that converts the viral dimeric RNA genome into dsDNA in the cytoplasm, shortly after virus entry into the cell. This enzyme displays a DNA polymerase activity that can copy either DNA or RNA templates, and a ribonuclease H (RNase H) activity that cleaves the RNA strand of RNA-DNA heteroduplexes in a partially processive 3' to 5' endonucleasic mode. Conversion of viral genomic RNA into dsDNA requires many steps. A tRNA binds to the primer-binding site (PBS) situated at the 5' end of the viral RNA. RT uses the 3' end of the tRNA primer to perform a short round of RNA-dependent minus-strand DNA synthesis. The reading proceeds through the U5 region and ends after the repeated (R) region which is present at both ends of viral RNA. The portion of the RNA-DNA heteroduplex is digested by the RNase H, resulting in a ssDNA product attached to the tRNA primer. This ssDNA/tRNA hybridizes with the identical R region situated at the 3' end of viral RNA. This template exchange, known as minus-strand DNA strong stop transfer, can be either intra- or intermolecular. RT uses the 3' end of this newly synthesized short ssDNA to perform the RNA-dependent minus-strand DNA synthesis of the whole template. RNase H digests the RNA template except for a polypurine tract (PPT) situated at the 5' end of the genome. It is not clear if both polymerase and RNase H activities are simultaneous. RNase H probably can proceed both in a polymerase-dependent (RNA cut into small fragments by the same RT performing DNA synthesis) and a polymerase-independent mode (cleavage of remaining RNA fragments by free RTs). Secondly, RT performs DNA-directed plus-strand DNA synthesis using the PPT that has not been removed by RNase H as primers. PPT and tRNA primers are then removed by RNase H. The 3' and 5' ssDNA PBS regions hybridize to form a circular dsDNA intermediate. Strand displacement synthesis by RT to the PBS and PPT ends produces a blunt ended, linear dsDNA copy of the viral genome that includes long terminal repeats (LTRs) at both ends. Catalyzes viral DNA integration into the host chromosome, by performing a series of DNA cutting and joining reactions. This enzyme activity takes place after virion entry into a cell and reverse transcription of the RNA genome in dsDNA. The first step in the integration process is 3' processing. This step requires a complex comprising the viral genome, matrix protein and integrase. This complex is called the pre-integration complex (PIC). The integrase protein removes 2 nucleotides from each 3' end of the viral DNA, leaving recessed CA OH's at the 3' ends. In the second step that requires cell division, the PIC enters cell nucleus. In the third step, termed strand transfer, the integrase protein joins the previously processed 3' ends to the 5' ends of strands of target cellular DNA at the site of integration. The last step is viral DNA integration into host chromosome. This chain is Gag-Pol polyprotein (pol), found in Papio (baboons).